Here is a 494-residue protein sequence, read N- to C-terminus: Rho GTPase-activating protein 19 (494 aa).

Ala2 is subject to N-acetylalanine. Residues Ser7 and Ser31 each carry the phosphoserine modification. One can recognise a Rho-GAP domain in the interval 102-308 (MSLKRKEKGV…FMIKHSQKLF (207 aa)). Disordered regions lie at residues 349 to 368 (KSQK…TQHH) and 399 to 421 (QSLT…ARSR). Over residues 354–368 (NRVDSCPHQEETQHH) the composition is skewed to basic and acidic residues. Residues 399–415 (QSLTQTPGREPSTSQVQ) are compositionally biased toward polar residues. 3 positions are modified to phosphoserine: Ser422, Ser438, and Ser470. Thr478 bears the Phosphothreonine mark.

Strong expression in fetal heart, brain, placenta, lung, liver, skeletal muscle, kidney and pancreas. Weak expression in adult pancreas, spleen, thymus, and ovary.

The protein resides in the nucleus. Functionally, GTPase activator for the Rho-type GTPases by converting them to an inactive GDP-bound state. The chain is Rho GTPase-activating protein 19 (ARHGAP19) from Homo sapiens (Human).